The chain runs to 843 residues: Alpha-L-fucosidase 2 (843 aa).

Residues 1–27 (MAEKSSFFVHFSCLLLLLTIIITCGEG) form the signal peptide. N-linked (GlcNAc...) asparagine glycosylation is found at Asn-62, Asn-253, Asn-365, and Asn-605.

It belongs to the glycosyl hydrolase 95 family. Ubiquitous. Highest expression in vascular tissues, leaf trichomes, root elongation zone and emerging lateral roots.

It is found in the secreted. Its subcellular location is the extracellular space. The protein resides in the apoplast. It carries out the reaction an alpha-L-fucoside + H2O = L-fucose + an alcohol. Its function is as follows. Hydrolyzes alpha-1,2-linked fucose. Also active on fucosylated xyloglucan oligosaccharides. No activity with 3-fucosyllactose, p-nitrophenyl-alpha-I-fucopyranoside, lacto-N-fucopentaose II, lacto-N-fucopentaose III or alpha 1,6-fucosylated chitopentaose. Involved in apoplastic xyloglucan metabolism. This is Alpha-L-fucosidase 2 (FUC95A) from Arabidopsis thaliana (Mouse-ear cress).